Here is a 53-residue protein sequence, read N- to C-terminus: Toxin CjTL7 (53 aa).

Residues 1–22 (MMIKVLLLLSSALVLFTPEAEG) form the signal peptide. Position 51 is a tryptophan amide (Trp-51).

Post-translationally, contains 4 disulfide bonds.

Its subcellular location is the secreted. It localises to the nematocyst. Its function is as follows. In vivo, only causes a weak change in behavior in shrimps (C.multidentata) (slight twitching of the walking legs), but no lethal effect is observed. No activity is observed when injected into fly larvae (M.domestica). The chain is Toxin CjTL7 from Epiactis japonica (Sea anemone).